The sequence spans 463 residues: Bifunctional protein GlmU (463 aa).

A pyrophosphorylase region spans residues 1-233 (MSKKSTFIIL…NFEVMGINSR (233 aa)). UDP-N-acetyl-alpha-D-glucosamine-binding positions include 10–13 (LAAG), Lys24, Gln76, 81–82 (GT), 104–106 (YGD), Gly143, Glu158, Asn173, and Asn231. Asp106 contributes to the Mg(2+) binding site. Asn231 contributes to the Mg(2+) binding site. The segment at 234 to 254 (YELFVAEQELKLRINKEHLSK) is linker. The N-acetyltransferase stretch occupies residues 255-463 (GVQIIDIYST…LRRKQMYENR (209 aa)). UDP-N-acetyl-alpha-D-glucosamine-binding residues include Arg336 and Lys354. Catalysis depends on His366, which acts as the Proton acceptor. Positions 369 and 380 each coordinate UDP-N-acetyl-alpha-D-glucosamine. Acetyl-CoA-binding positions include 389-390 (NY), Ala426, and Arg443.

The protein in the N-terminal section; belongs to the N-acetylglucosamine-1-phosphate uridyltransferase family. This sequence in the C-terminal section; belongs to the transferase hexapeptide repeat family. Homotrimer. Mg(2+) serves as cofactor.

It is found in the cytoplasm. It carries out the reaction alpha-D-glucosamine 1-phosphate + acetyl-CoA = N-acetyl-alpha-D-glucosamine 1-phosphate + CoA + H(+). The catalysed reaction is N-acetyl-alpha-D-glucosamine 1-phosphate + UTP + H(+) = UDP-N-acetyl-alpha-D-glucosamine + diphosphate. It functions in the pathway nucleotide-sugar biosynthesis; UDP-N-acetyl-alpha-D-glucosamine biosynthesis; N-acetyl-alpha-D-glucosamine 1-phosphate from alpha-D-glucosamine 6-phosphate (route II): step 2/2. The protein operates within nucleotide-sugar biosynthesis; UDP-N-acetyl-alpha-D-glucosamine biosynthesis; UDP-N-acetyl-alpha-D-glucosamine from N-acetyl-alpha-D-glucosamine 1-phosphate: step 1/1. Its pathway is bacterial outer membrane biogenesis; LPS lipid A biosynthesis. Catalyzes the last two sequential reactions in the de novo biosynthetic pathway for UDP-N-acetylglucosamine (UDP-GlcNAc). The C-terminal domain catalyzes the transfer of acetyl group from acetyl coenzyme A to glucosamine-1-phosphate (GlcN-1-P) to produce N-acetylglucosamine-1-phosphate (GlcNAc-1-P), which is converted into UDP-GlcNAc by the transfer of uridine 5-monophosphate (from uridine 5-triphosphate), a reaction catalyzed by the N-terminal domain. This is Bifunctional protein GlmU from Caldicellulosiruptor saccharolyticus (strain ATCC 43494 / DSM 8903 / Tp8T 6331).